The following is a 269-amino-acid chain: MKLLLLLASVLCLALIVSARPSDETTDQESSTELSEDTSDSYHQEEDTSETGADAGTEDGNSEDDSSELESSSEEGHEDGSEDATGEEGGAGEKGEAGEEDEAGEEGEAGEEGEAGEEGGAGEEGGAGEEGGADEEGSAGEEGGAEGGEESPVNTYHQVHNLLKNIMNVGTKNNYLKSFILARLQERLMNPTIDLVGSISKYSKIKECFDSLADDVKSLVEKSETSYEECSKDKNNPHCGSEGTRELDEGLIEREQKLSDCIVEKRDSE.

An N-terminal signal peptide occupies residues 1-19; the sequence is MKLLLLLASVLCLALIVSA. Residues 19–152 form a disordered region; that stretch reads ARPSDETTDQ…GGAEGGEESP (134 aa). The GE-rich region which mediates binding of Ca(2+) stretch occupies residues 38-148; the sequence is TSDSYHQEED…AGEEGGAEGG (111 aa). Acidic residues-rich tracts occupy residues 56 to 73, 98 to 121, and 131 to 149; these read GTEDGNSEDDSSELESSS, GEEDEAGEEGEAGEEGEAGEEGGA, and GGADEEGSAGEEGGAEGGE. Residues 148–269 are mediates binding of host collagen and inhibition of platelet aggregation; the sequence is GEESPVNTYH…DCIVEKRDSE (122 aa). 2 disulfide bridges follow: C208–C261 and C230–C239.

It belongs to the aegyptin family. As to expression, female saliva (at protein level). Distal lateral lobes of female salivary gland (at protein level). Low-level expression in male salivary gland. Not detected in female and male carcasses.

The protein localises to the secreted. In terms of biological role, modulates blood feeding of female mosquitoes on vertebrate hosts. Inhibits collagen-induced platelet aggregation in the host via preventing collagen interaction with its ligands: glycoprotein VI and integrin alpha-2/beta-1 (ITGA2/ITGB1). Inhibits collagen-induced increase of Ca(2+) levels in host platelets. Binds to host collagens. Binds Ca(2+). Prevents a decrease in platelet count in the host blood after collagen injection. Functionally, (Microbial infection) Does not affect the development of Plasmodium berghei parasites in mosquitoes. The chain is Aegyptin-like protein from Anopheles stephensi (Indo-Pakistan malaria mosquito).